A 30-amino-acid chain; its full sequence is Cytochrome b6-f complex subunit 8 (30 aa).

The helical transmembrane segment at 4-24 threads the bilayer; the sequence is IISLGWGSLLAIFSFSIALVV.

Belongs to the PetN family. In terms of assembly, the 4 large subunits of the cytochrome b6-f complex are cytochrome b6, subunit IV (17 kDa polypeptide, PetD), cytochrome f and the Rieske protein, while the 4 small subunits are PetG, PetL, PetM and PetN. The complex functions as a dimer.

The protein resides in the plastid. Its subcellular location is the chloroplast thylakoid membrane. In terms of biological role, component of the cytochrome b6-f complex, which mediates electron transfer between photosystem II (PSII) and photosystem I (PSI), cyclic electron flow around PSI, and state transitions. The sequence is that of Cytochrome b6-f complex subunit 8 from Gracilaria tenuistipitata var. liui (Red alga).